The primary structure comprises 729 residues: MEEEGIRNFKELRAKFQKFNAAPLPGPMRFPAGVSRKHDRGSTQPAQDLANRKCLSSHHHQTPSHSSTGVSQPLKNQTLKSAQGDELQKTSSSSGTPEKSTVCPERDFQKAAVPLDVTKSRAKTSNEEKGMTLSSFRYKLWNWEKVSSQNGEMSPAPLLTNGGIKTFHFEGQKTMGLAQDKPEKSLKATGAQTLPPQSHSMAQRKSPVTSKASSVSLPPHSRKSTKSPATEGSHRSSQCQPVYECELDSLVPEKPQSRHCRLPKTKPLPSIETLGPPPPKPSKPPFVNLYAFHRLPATVTKTPKEETMKEGPLSPDSAELEEAHNYDTTISYLRHSGNSINLCAEGESTEATYEIEIEELQKPWRSFFLPELSPRPKEEENTMEEKESWESEPLEPRKELHPSRPPKVVVYKETPGKTQMAGVHEDRRSVPAGNQEAMTDIMQNRLFPEDVTLTRHSQDKSGYVEALEVTKETPSPSTIRSSSSSEKTYDAVECSREDVRKWDFSSSFTSDSEENCEEMYEDIYKAKNDDPKTEVAGRTALRKLQQIFRKENVVFRMKKTKSKEIVSNGFSVSLPDLGPRSQDDSQDGIIYDDVDTREKESNDEDKVKTWKTKFLIPKGKKWGKGSQGSKSFSPRHFFRTKKQKLEKNRMEKEEKLFRERFQYGKEILVINRAVACASNSRNGMFDLPIIPGEQLEVIDTTEQNLVICRNSKGKYGYVLVEHLDFKHQG.

Disordered stretches follow at residues 18-130 (KFNA…EEKG), 170-320 (EGQK…SAEL), 371-408 (ELSP…PPKV), and 469-490 (VTKE…KTYD). Polar residues-rich tracts occupy residues 69-81 (GVSQ…TLKS), 89-99 (KTSSSSGTPEK), 190-216 (GAQT…SSVS), and 226-240 (KSPA…SQCQ). Residues 275 to 284 (GPPPPKPSKP) show a composition bias toward pro residues. Over residues 374 to 402 (PRPKEEENTMEEKESWESEPLEPRKELHP) the composition is skewed to basic and acidic residues. Residues 473 to 485 (TPSPSTIRSSSSS) show a composition bias toward low complexity. A Phosphotyrosine modification is found at Tyr-489. The short motif at 520-523 (YEDI) is the SH2-binding; to LCP2 element. The disordered stretch occupies residues 576–603 (DLGPRSQDDSQDGIIYDDVDTREKESND). Acidic residues predominate over residues 584–593 (DSQDGIIYDD). Tyr-591 is subject to Phosphotyrosine. Residues 594 to 603 (VDTREKESND) are compositionally biased toward basic and acidic residues. The SH3 domain maps to 668–728 (LVINRAVACA…LVEHLDFKHQ (61 aa)).

In terms of assembly, interacts with SKAP1, LCK and FYN. The phosphorylated form interacts with LCP2. Post-translationally, phosphorylation is required for its function in T-cell activation.

The protein localises to the membrane raft. Adapter protein that plays a role in T-cell receptor (TCR)-mediated activation of signaling pathways. Required for T-cell activation and integrin-mediated T-cell adhesion in response to TCR stimulation. The protein is FYN-binding protein 2 of Mus musculus (Mouse).